The sequence spans 391 residues: 8-amino-7-oxononanoate synthase (391 aa).

R19 provides a ligand contact to substrate. Pyridoxal 5'-phosphate is bound at residue 106 to 107 (GY). H131 is a binding site for substrate. S178, H206, and T234 together coordinate pyridoxal 5'-phosphate. An N6-(pyridoxal phosphate)lysine modification is found at K237. T353 serves as a coordination point for substrate.

Belongs to the class-II pyridoxal-phosphate-dependent aminotransferase family. BioF subfamily. In terms of assembly, homodimer. It depends on pyridoxal 5'-phosphate as a cofactor.

It carries out the reaction 6-carboxyhexanoyl-[ACP] + L-alanine + H(+) = (8S)-8-amino-7-oxononanoate + holo-[ACP] + CO2. Its pathway is cofactor biosynthesis; biotin biosynthesis. Catalyzes the decarboxylative condensation of pimeloyl-[acyl-carrier protein] and L-alanine to produce 8-amino-7-oxononanoate (AON), [acyl-carrier protein], and carbon dioxide. The sequence is that of 8-amino-7-oxononanoate synthase from Geobacter metallireducens (strain ATCC 53774 / DSM 7210 / GS-15).